Consider the following 940-residue polypeptide: Phagocyte signaling-impaired protein (940 aa).

The TPR repeat unit spans residues 77-110 (STTLHVMTLCYKETDQLDKICQIFTSASKQLPGN).

It belongs to the MDM20/NAA25 family. Component of the N-terminal acetyltransferase B (NatB) complex.

It is found in the lysosome. Functionally, non-catalytic subunit of the NatB complex which catalyzes acetylation of the N-terminal methionine residues of proteins beginning with Met-Asp or Met-Glu. Has 2 roles in the larval immune response: required both for the phagocytic degradation of internalized bacteria and for the induction of Defensin in the fat body. Within the phagocytic blood cells, has a role in detection of infection and activation of the humoral immune response. This chain is Phagocyte signaling-impaired protein, found in Aedes aegypti (Yellowfever mosquito).